A 207-amino-acid polypeptide reads, in one-letter code: Small ribosomal subunit protein uS4 (207 aa).

The disordered stretch occupies residues Lys-31–Gln-55. Polar residues predominate over residues Gly-42–Gly-53. The S4 RNA-binding domain occupies Ser-97–Leu-160.

Belongs to the universal ribosomal protein uS4 family. Part of the 30S ribosomal subunit. Contacts protein S5. The interaction surface between S4 and S5 is involved in control of translational fidelity.

One of the primary rRNA binding proteins, it binds directly to 16S rRNA where it nucleates assembly of the body of the 30S subunit. In terms of biological role, with S5 and S12 plays an important role in translational accuracy. The chain is Small ribosomal subunit protein uS4 from Burkholderia ambifaria (strain MC40-6).